A 1029-amino-acid chain; its full sequence is Chitin synthase 3 (1029 aa).

The disordered stretch occupies residues 1–29 (MAYYSRPASAGAARAQDDQDPYPYYPDPD). N-linked (GlcNAc...) asparagine glycosylation occurs at Asn37. Residues 46 to 71 (ASGAASSASHTSPFSDAHAASASPAS) are compositionally biased toward low complexity. 2 disordered regions span residues 46 to 105 (ASGA…SRMP) and 168 to 209 (LAHR…AGTS). The span at 76–91 (SHQQVSAHAPQQQHMS) shows a compositional bias: polar residues. The segment covering 191–202 (AHDEKYAYDRPD) has biased composition (basic and acidic residues). N-linked (GlcNAc...) asparagine glycosylation is found at Asn401, Asn514, Asn527, and Asn689. 7 consecutive transmembrane segments (helical) span residues 723–743 (FYSF…YIFF), 760–780 (IGVF…SSFI), 796–816 (AAVV…VLCL), 830–850 (AQMV…SLLA), 860–880 (FLQY…YAFC), 963–983 (VVLA…NGDA), and 998–1018 (VYMV…FIGS).

This sequence belongs to the chitin synthase family. Class I subfamily.

The protein resides in the cell membrane. It is found in the cytoplasmic vesicle membrane. It carries out the reaction [(1-&gt;4)-N-acetyl-beta-D-glucosaminyl](n) + UDP-N-acetyl-alpha-D-glucosamine = [(1-&gt;4)-N-acetyl-beta-D-glucosaminyl](n+1) + UDP + H(+). Its function is as follows. Polymerizes chitin, a structural polymer of the cell wall and septum, by transferring the sugar moiety of UDP-GlcNAc to the non-reducing end of the growing chitin polymer. The protein is Chitin synthase 3 of Mycosarcoma maydis (Corn smut fungus).